Consider the following 278-residue polypeptide: uncharacterized protein (278 aa).

This is an uncharacterized protein from Schizosaccharomyces pombe (strain 972 / ATCC 24843) (Fission yeast).